The primary structure comprises 406 residues: MGIDDYLSKIRALTLNHKRVSTITLSETYFNRDEVYGKLMNYYDEVFLLQTCNRVEVYVYGDDDSVAEDMYKVKGTINHVDKLVGMNAVRHIFRVAAGLESAAVGESEILGQVEDAFNDARKRGALGGLLGFTIERAIRTGKEIRSRFPEISIGLASIGSLVAEYVHRVRGLNSRIAVIGAGSIGSDIVRRLAEKGFRNVIIVNRTLDKAKAAALRYGFNYAPIDSLRSVIRDSDVVIFATSATNPLLRRRDAEELSGKPIIIDVGVPRNVDPEIPGVVSIDELKNIENEIREGKRKALDEASRLIELRLIEYRRLFARRVIEGMIGELTKWGLSIGESEVKRAVKAGLIKNEEDGAALAVKSTVKKIMLPLLTYLKELAEEDKFDEALIIISGIKAKLNGDGKQS.

Substrate-binding positions include 51-54 (TCNR), S101, 106-108 (ESE), and Q112. The Nucleophile role is filled by C52. Residue 180–185 (GAGSIG) coordinates NADP(+).

Belongs to the glutamyl-tRNA reductase family. As to quaternary structure, homodimer.

It carries out the reaction (S)-4-amino-5-oxopentanoate + tRNA(Glu) + NADP(+) = L-glutamyl-tRNA(Glu) + NADPH + H(+). It participates in porphyrin-containing compound metabolism; protoporphyrin-IX biosynthesis; 5-aminolevulinate from L-glutamyl-tRNA(Glu): step 1/2. Catalyzes the NADPH-dependent reduction of glutamyl-tRNA(Glu) to glutamate 1-semialdehyde (GSA). In Caldivirga maquilingensis (strain ATCC 700844 / DSM 13496 / JCM 10307 / IC-167), this protein is Glutamyl-tRNA reductase.